Consider the following 264-residue polypeptide: MVKPLPRLRLQGFNNLTKALSFNIYDVCYARTEEERQRYIEYIDEEYNADRLTQILTDVAEIIGANILNVARQDYDPQGASVTILISEEPVIDKKLAGKELISDAVVAHMDKSHITVHTYPETHPQEGIATFRADIDVATCGVISPLKALNYLIESLESDIVIMDYRVRGFTRDVKGKKHFIDHKINSIQNFLAKNIKSRYEMFDVNVYQENIFHTKMHLKDFDLDQYLFEEKAKNLSFKERMKIEALLKREIEELFHGRNLSE.

Residue Ser113 is the Schiff-base intermediate with substrate; via pyruvic acid of the active site. Residue Ser113 is modified to Pyruvic acid (Ser); by autocatalysis. The active-site Proton acceptor; for processing activity is His118. Catalysis depends on Cys141, which acts as the Proton donor; for catalytic activity.

This sequence belongs to the prokaryotic AdoMetDC family. Type 2 subfamily. Heterooctamer of four alpha and four beta chains arranged as a tetramer of alpha/beta heterodimers. Requires pyruvate as cofactor. In terms of processing, is synthesized initially as an inactive proenzyme. Formation of the active enzyme involves a self-maturation process in which the active site pyruvoyl group is generated from an internal serine residue via an autocatalytic post-translational modification. Two non-identical subunits are generated from the proenzyme in this reaction, and the pyruvate is formed at the N-terminus of the alpha chain, which is derived from the carboxyl end of the proenzyme. The post-translation cleavage follows an unusual pathway, termed non-hydrolytic serinolysis, in which the side chain hydroxyl group of the serine supplies its oxygen atom to form the C-terminus of the beta chain, while the remainder of the serine residue undergoes an oxidative deamination to produce ammonia and the pyruvoyl group blocking the N-terminus of the alpha chain.

The enzyme catalyses S-adenosyl-L-methionine + H(+) = S-adenosyl 3-(methylsulfanyl)propylamine + CO2. It participates in amine and polyamine biosynthesis; S-adenosylmethioninamine biosynthesis; S-adenosylmethioninamine from S-adenosyl-L-methionine: step 1/1. In terms of biological role, catalyzes the decarboxylation of S-adenosylmethionine to S-adenosylmethioninamine (dcAdoMet), the propylamine donor required for the synthesis of the polyamines spermine and spermidine from the diamine putrescine. This chain is S-adenosylmethionine decarboxylase proenzyme, found in Stenotrophomonas maltophilia (strain K279a).